The following is a 284-amino-acid chain: Protein phosphatase 1 regulatory subunit 3B (284 aa).

The short motif at 61–64 is the PP1-binding motif element; sequence RVSF. A CBM21 domain is found at 124–232; that stretch reads RNRLQTNHVC…SNKGKNYRIT (109 aa). Serine 260 is modified (phosphoserine).

In terms of assembly, interacts with glycogen, PPP1CC catalytic subunit of PP1 and PYGL. Associates with glycogen particles. Forms complexes with debranching enzyme, glycogen phosphorylase, glycogen synthase and phosphorylase kinase which is necessary for its regulation of PP1 activity. Highly expressed in liver. Moderately expressed in kidney, heart, testis, spleen and lung. Weakly expressed in skeletal muscle (at protein level). Expressed predominantly in liver. Expressed moderately in heart. Expressed weakly in lung, kidney, spleen and skeletal muscle.

Acts as a glycogen-targeting subunit for phosphatase PP1. Facilitates interaction of the PP1 with enzymes of the glycogen metabolism and regulates its activity. Suppresses the rate at which PP1 dephosphorylates (inactivates) glycogen phosphorylase and enhances the rate at which it activates glycogen synthase and therefore limits glycogen breakdown. Its activity is inhibited by PYGL, resulting in inhibition of the glycogen synthase and glycogen phosphorylase phosphatase activities of PP1. Dramatically increases basal and insulin-stimulated glycogen synthesis upon overexpression in hepatocytes. This chain is Protein phosphatase 1 regulatory subunit 3B (Ppp1r3b), found in Rattus norvegicus (Rat).